The primary structure comprises 313 residues: MSKSTIRIATRQSPLAMWQALYVKEQLQIAHPSLVVELVPMVTKGDIILDTPLAKVGGKGLFVKELELALLSSRADIAVHSMKDVPIDFPEGLGLVTICEREDPRDAFVSNHYDSLEQLPAGSVVGTSSLRRQCQLKALRPDLIIRDLRGNVGTRLSKLDNGDYDAIILAVAGLKRLKLTERIRSSLSAEQSLPAVGQGAVGIECRLDDHDTQALLAALNHADTATCVKAERAMNTRLEGGCQVPIGSYAIWQNGKIWLRALVGSPDGETILRGERLVSPEDAEQAGISLAEELLDKGAREILTAVYQGNTAI.

Cys-242 is modified (S-(dipyrrolylmethanemethyl)cysteine).

Belongs to the HMBS family. Monomer. Dipyrromethane serves as cofactor.

It catalyses the reaction 4 porphobilinogen + H2O = hydroxymethylbilane + 4 NH4(+). Its pathway is porphyrin-containing compound metabolism; protoporphyrin-IX biosynthesis; coproporphyrinogen-III from 5-aminolevulinate: step 2/4. In terms of biological role, tetrapolymerization of the monopyrrole PBG into the hydroxymethylbilane pre-uroporphyrinogen in several discrete steps. The sequence is that of Porphobilinogen deaminase from Proteus mirabilis (strain HI4320).